The following is a 99-amino-acid chain: Putative protein adenylyltransferase MJ0141 (99 aa).

Positions 29 to 43 (GSYARGDYDEESDVD) match the GSX(10)DXD motif motif. Mg(2+)-binding residues include D41 and D43.

This sequence belongs to the MntA antitoxin family. Mg(2+) serves as cofactor.

The catalysed reaction is L-tyrosyl-[protein] + ATP = O-(5'-adenylyl)-L-tyrosyl-[protein] + diphosphate. It catalyses the reaction O-(5'-adenylyl)-L-tyrosyl-[protein] + ATP = O-[5'-(adenylyl-(5'-&gt;3')-adenylyl)]-L-tyrosyl-[protein] + diphosphate. Putative antitoxin component of a putative type VII toxin-antitoxin (TA) system. Its cognate toxin might be MF0142, which it might AMPylate. The protein is Putative protein adenylyltransferase MJ0141 of Methanocaldococcus jannaschii (strain ATCC 43067 / DSM 2661 / JAL-1 / JCM 10045 / NBRC 100440) (Methanococcus jannaschii).